The following is a 117-amino-acid chain: Large ribosomal subunit protein bL20c (117 aa).

Belongs to the bacterial ribosomal protein bL20 family.

Its subcellular location is the plastid. The protein resides in the chloroplast. In terms of biological role, binds directly to 23S ribosomal RNA and is necessary for the in vitro assembly process of the 50S ribosomal subunit. It is not involved in the protein synthesizing functions of that subunit. The sequence is that of Large ribosomal subunit protein bL20c from Carica papaya (Papaya).